The sequence spans 230 residues: Demethylmenaquinone methyltransferase (230 aa).

Residues T62, D80, 100–101 (DG), and S117 each bind S-adenosyl-L-methionine.

It belongs to the class I-like SAM-binding methyltransferase superfamily. MenG/UbiE family.

It carries out the reaction a 2-demethylmenaquinol + S-adenosyl-L-methionine = a menaquinol + S-adenosyl-L-homocysteine + H(+). It functions in the pathway quinol/quinone metabolism; menaquinone biosynthesis; menaquinol from 1,4-dihydroxy-2-naphthoate: step 2/2. Functionally, methyltransferase required for the conversion of demethylmenaquinol (DMKH2) to menaquinol (MKH2). This is Demethylmenaquinone methyltransferase from Corynebacterium glutamicum (strain ATCC 13032 / DSM 20300 / JCM 1318 / BCRC 11384 / CCUG 27702 / LMG 3730 / NBRC 12168 / NCIMB 10025 / NRRL B-2784 / 534).